The following is a 156-amino-acid chain: MKLQLVAVGTKMPDWVQTGFTDYLRRFPKDMPFELLEIPAGKRGKNADIKRILEREGEQMLAAVGKGNRIVTLDIPGTRWETPQLAQQLERWKQDGRDVSLLIGGPEGLAPECKAAAEQSWSLSPLTLPHPLVRVLVAESLYRAWSITTNHPYHRE.

S-adenosyl-L-methionine contacts are provided by residues Leu73, Gly104, and 123–128 (LSPLTL).

Belongs to the RNA methyltransferase RlmH family. In terms of assembly, homodimer.

It localises to the cytoplasm. It catalyses the reaction pseudouridine(1915) in 23S rRNA + S-adenosyl-L-methionine = N(3)-methylpseudouridine(1915) in 23S rRNA + S-adenosyl-L-homocysteine + H(+). Functionally, specifically methylates the pseudouridine at position 1915 (m3Psi1915) in 23S rRNA. This chain is Ribosomal RNA large subunit methyltransferase H, found in Pectobacterium carotovorum subsp. carotovorum (strain PC1).